The sequence spans 399 residues: Adenylate cyclase (399 aa).

Residues 1-10 (MTVGDTTSGS) are compositionally biased toward polar residues. Positions 1 to 35 (MTVGDTTSGSGEEPAADSSVHATPHHEVDHTVEPT) are disordered. Residues 24 to 33 (PHHEVDHTVE) are compositionally biased toward basic and acidic residues. In terms of domain architecture, Guanylate cyclase spans 198-307 (RVRFADLVGF…TTVNLASRLT (110 aa)). Mg(2+) is bound by residues Asp203 and Asp247.

Belongs to the adenylyl cyclase class-3 family. Mg(2+) serves as cofactor.

It catalyses the reaction ATP = 3',5'-cyclic AMP + diphosphate. The chain is Adenylate cyclase (cya) from Streptomyces griseus.